An 878-amino-acid chain; its full sequence is F-box DNA helicase protein 1 (878 aa).

Residues 8–56 (SCKFYRLPLEIIPLICRFLSVQDIQSFIRVFPSFQTILDSSNDLFWKKK) form the F-box domain.

It belongs to the helicase family. UvrD subfamily. As to quaternary structure, part of the E3 ubiquitin ligase Skp1-Cullin-1-F-box (SCF) complex. Interacts with skp1 and ssb1. Requires Mg(2+) as cofactor. Mn(2+) serves as cofactor.

The protein resides in the cytoplasm. Its subcellular location is the nucleus. It catalyses the reaction Couples ATP hydrolysis with the unwinding of duplex DNA by translocating in the 3'-5' direction.. It carries out the reaction ATP + H2O = ADP + phosphate + H(+). The protein operates within protein modification; protein ubiquitination. Functionally, involved in ATP-dependent DNA-unwinding in a 3' to 5' direction, and ATP-ase activities stimulated by the single-stranded DNA-binding protein ssb1. Essential for viability and normal growth of stationary phase cells and in the absence of either srs2 or rqh1 DNA helicase. Involved in DNA recombination repair of strand breaks and stalled or collapsed replication forks, on the rhp51-dependent pathway: promotes rhp51 filament dissolution from stalled forks, thereby inhibiting homologous recombination and preventing excessive recombination. Ubiquitination and DNA helicase activities are essential for controlling rhp51-dependent recombination in the absence of rad22. Plays a role in the processing of toxic recombination intermediates. Promotes proper chromosome segregation. The polypeptide is F-box DNA helicase protein 1 (fbh1) (Schizosaccharomyces pombe (strain 972 / ATCC 24843) (Fission yeast)).